Reading from the N-terminus, the 297-residue chain is Dehydrodolichyl diphosphate synthase complex subunit Nus1 (297 aa).

A run of 2 helical transmembrane segments spans residues 7–26 (LVWR…TSWL) and 40–56 (CCRA…GFTL). Residues 63 to 73 (GRNRRHHRHPH) show a composition bias toward basic residues. Residues 63–86 (GRNRRHHRHPHGGPGPGPGPAATH) form a disordered region. Residues 121 to 139 (IASLVVWCMAVGISYISVY) form a helical membrane-spanning segment. N-linked (GlcNAc...) asparagine glycosylation is found at N148 and N275. The short motif at 294–296 (RLG) is the RXG motif; crucial for prenyltransferase activity element. Positions 295 and 296 each coordinate isopentenyl diphosphate.

The protein belongs to the UPP synthase family. As to quaternary structure, the active dehydrodolichyl diphosphate synthase complex is a heterotetramer composed of a dimer of heterodimer of DHDDS and NUS1. Interacts with NPC2. The cofactor is Mg(2+). As to expression, highly expressed in heart, liver, kidney and pancreas.

The protein resides in the endoplasmic reticulum membrane. It catalyses the reaction n isopentenyl diphosphate + (2E,6E)-farnesyl diphosphate = a di-trans,poly-cis-polyprenyl diphosphate + n diphosphate. The protein operates within protein modification; protein glycosylation. Its pathway is lipid metabolism. Its function is as follows. With DHDDS, forms the dehydrodolichyl diphosphate synthase (DDS) complex, an essential component of the dolichol monophosphate (Dol-P) biosynthetic machinery. Both subunits contribute to enzymatic activity, i.e. condensation of multiple copies of isopentenyl pyrophosphate (IPP) to farnesyl pyrophosphate (FPP) to produce dehydrodolichyl diphosphate (Dedol-PP), a precursor of dolichol phosphate which is utilized as a sugar carrier in protein glycosylation in the endoplasmic reticulum (ER). Synthesizes long-chain polyprenols, mostly of C95 and C100 chain length. Regulates the glycosylation and stability of nascent NPC2, thereby promoting trafficking of LDL-derived cholesterol. Acts as a specific receptor for the N-terminus of Nogo-B, a neural and cardiovascular regulator. The polypeptide is Dehydrodolichyl diphosphate synthase complex subunit Nus1 (Mus musculus (Mouse)).